The primary structure comprises 348 residues: Uroporphyrinogen decarboxylase (348 aa).

Substrate is bound by residues 28–32 (RQAGR), Asp-78, Tyr-154, Thr-209, and His-325.

This sequence belongs to the uroporphyrinogen decarboxylase family. Homodimer.

Its subcellular location is the cytoplasm. The enzyme catalyses uroporphyrinogen III + 4 H(+) = coproporphyrinogen III + 4 CO2. It functions in the pathway porphyrin-containing compound metabolism; protoporphyrin-IX biosynthesis; coproporphyrinogen-III from 5-aminolevulinate: step 4/4. In terms of biological role, catalyzes the decarboxylation of four acetate groups of uroporphyrinogen-III to yield coproporphyrinogen-III. This Rhodopseudomonas palustris (strain BisB5) protein is Uroporphyrinogen decarboxylase.